Consider the following 1064-residue polypeptide: Isoleucine--tRNA ligase, cytoplasmic (1064 aa).

Positions 42–52 (PFATGRPHHGH) match the 'HIGH' region motif. Positions 597–601 (KMSKR) match the 'KMSKS' region motif. Lys600 contacts ATP.

The protein belongs to the class-I aminoacyl-tRNA synthetase family.

The protein resides in the cytoplasm. It catalyses the reaction tRNA(Ile) + L-isoleucine + ATP = L-isoleucyl-tRNA(Ile) + AMP + diphosphate. In Schizosaccharomyces pombe (strain 972 / ATCC 24843) (Fission yeast), this protein is Isoleucine--tRNA ligase, cytoplasmic (irs1).